A 670-amino-acid polypeptide reads, in one-letter code: DNA ligase (670 aa).

Residues 32–36, 81–82, and glutamate 113 each bind NAD(+); these read DAEYD and SL. Catalysis depends on lysine 115, which acts as the N6-AMP-lysine intermediate. Residues arginine 136, glutamate 173, lysine 290, and lysine 314 each contribute to the NAD(+) site. 4 residues coordinate Zn(2+): cysteine 408, cysteine 411, cysteine 426, and cysteine 432. In terms of domain architecture, BRCT spans 592 to 670; it reads EIDSPFAGKT…EAEMIRLLGE (79 aa).

It belongs to the NAD-dependent DNA ligase family. LigA subfamily. It depends on Mg(2+) as a cofactor. Requires Mn(2+) as cofactor.

It carries out the reaction NAD(+) + (deoxyribonucleotide)n-3'-hydroxyl + 5'-phospho-(deoxyribonucleotide)m = (deoxyribonucleotide)n+m + AMP + beta-nicotinamide D-nucleotide.. In terms of biological role, DNA ligase that catalyzes the formation of phosphodiester linkages between 5'-phosphoryl and 3'-hydroxyl groups in double-stranded DNA using NAD as a coenzyme and as the energy source for the reaction. It is essential for DNA replication and repair of damaged DNA. The chain is DNA ligase from Yersinia pseudotuberculosis serotype O:1b (strain IP 31758).